We begin with the raw amino-acid sequence, 86 residues long: Acyl carrier protein (86 aa).

Residues 2 to 82 (ATVFERVKKV…AVVDYLKSKG (81 aa)) enclose the Carrier domain. Residue serine 37 is modified to O-(pantetheine 4'-phosphoryl)serine.

Belongs to the acyl carrier protein (ACP) family. Post-translationally, 4'-phosphopantetheine is transferred from CoA to a specific serine of apo-ACP by AcpS. This modification is essential for activity because fatty acids are bound in thioester linkage to the sulfhydryl of the prosthetic group.

The protein resides in the cytoplasm. It participates in lipid metabolism; fatty acid biosynthesis. Functionally, carrier of the growing fatty acid chain in fatty acid biosynthesis. The protein is Acyl carrier protein of Dehalococcoides mccartyi (strain ATCC BAA-2100 / JCM 16839 / KCTC 5957 / BAV1).